The chain runs to 325 residues: MPPLADASTETLSPAEQAAVRHPEKAHRPDQPIARKPDWIRVKAPGSPEWVETQKIVKEHKLVTVCEEAGCPNIGECWAKKHATFMIMGDTCTRACAFCNVKTGLPNGLDPHEPAHIADAVQKLGLSHVVITSVDRDDLADGGAEHFAQVIRAIREASPKTTIEVLTPDFLRKDGALEIVVAARPDVFNHNLETVPAKYLSVRPGARYFHSIRLLQRVKELDPTIFTKSGIMVGLGETRNEVLQLMDDLRTADVDFLTIGQYLQPTRKHHAVEAFITPDEFAAYAEVANAKGFLLVSASPLTRSSHHAGEDFARLKAARLERLGR.

The interval 1-32 is disordered; sequence MPPLADASTETLSPAEQAAVRHPEKAHRPDQP. The span at 19 to 32 shows a compositional bias: basic and acidic residues; that stretch reads AVRHPEKAHRPDQP. 7 residues coordinate [4Fe-4S] cluster: Cys-66, Cys-71, Cys-77, Cys-92, Cys-96, Cys-99, and Ser-305. The Radical SAM core domain occupies 78 to 294; sequence WAKKHATFMI…AEVANAKGFL (217 aa).

It belongs to the radical SAM superfamily. Lipoyl synthase family. [4Fe-4S] cluster is required as a cofactor.

It localises to the cytoplasm. The enzyme catalyses [[Fe-S] cluster scaffold protein carrying a second [4Fe-4S](2+) cluster] + N(6)-octanoyl-L-lysyl-[protein] + 2 oxidized [2Fe-2S]-[ferredoxin] + 2 S-adenosyl-L-methionine + 4 H(+) = [[Fe-S] cluster scaffold protein] + N(6)-[(R)-dihydrolipoyl]-L-lysyl-[protein] + 4 Fe(3+) + 2 hydrogen sulfide + 2 5'-deoxyadenosine + 2 L-methionine + 2 reduced [2Fe-2S]-[ferredoxin]. It functions in the pathway protein modification; protein lipoylation via endogenous pathway; protein N(6)-(lipoyl)lysine from octanoyl-[acyl-carrier-protein]: step 2/2. Functionally, catalyzes the radical-mediated insertion of two sulfur atoms into the C-6 and C-8 positions of the octanoyl moiety bound to the lipoyl domains of lipoate-dependent enzymes, thereby converting the octanoylated domains into lipoylated derivatives. The protein is Lipoyl synthase of Beijerinckia indica subsp. indica (strain ATCC 9039 / DSM 1715 / NCIMB 8712).